Consider the following 247-residue polypeptide: UPF0309 protein lin2794 (247 aa).

Residues 31–214 (VAESIENDGV…EKMVNDNFTP (184 aa)) enclose the SIS domain.

It belongs to the UPF0309 family.

This is UPF0309 protein lin2794 from Listeria innocua serovar 6a (strain ATCC BAA-680 / CLIP 11262).